The primary structure comprises 489 residues: Cytochrome P450 2C3 (489 aa).

Residue C434 coordinates heme.

The protein belongs to the cytochrome P450 family. Heme serves as cofactor.

The protein localises to the endoplasmic reticulum membrane. It localises to the microsome membrane. It carries out the reaction an organic molecule + reduced [NADPH--hemoprotein reductase] + O2 = an alcohol + oxidized [NADPH--hemoprotein reductase] + H2O + H(+). Its function is as follows. Cytochromes P450 are a group of heme-thiolate monooxygenases. In liver microsomes, this enzyme is involved in an NADPH-dependent electron transport pathway. It oxidizes a variety of structurally unrelated compounds, including steroids, fatty acids, and xenobiotics. The protein is Cytochrome P450 2C3 (CYP2C3) of Oryctolagus cuniculus (Rabbit).